The primary structure comprises 325 residues: Cytochrome f (325 aa).

Residues 1–40 (MKTPELMAIWQRLKTACLVAIATFGLFFASDVLFPQAAAA) form the signal peptide. Residues Tyr-41, Cys-62, Cys-65, and His-66 each contribute to the heme site. Residues 290-309 (IYGYMAFVAGIMLTQIFLVL) traverse the membrane as a helical segment.

This sequence belongs to the cytochrome f family. The 4 large subunits of the cytochrome b6-f complex are cytochrome b6, subunit IV (17 kDa polypeptide, PetD), cytochrome f and the Rieske protein, while the 4 small subunits are PetG, PetL, PetM and PetN. The complex functions as a dimer. It depends on heme as a cofactor.

It localises to the cellular thylakoid membrane. Its function is as follows. Component of the cytochrome b6-f complex, which mediates electron transfer between photosystem II (PSII) and photosystem I (PSI), cyclic electron flow around PSI, and state transitions. The polypeptide is Cytochrome f (petA) (Picosynechococcus sp. (strain ATCC 27264 / PCC 7002 / PR-6) (Agmenellum quadruplicatum)).